The chain runs to 287 residues: uncharacterized protein (287 aa).

The span at Met-1–Asn-17 shows a compositional bias: basic and acidic residues. The interval Met-1–Phe-29 is disordered. Residues Leu-38 to Gly-60 traverse the membrane as a helical segment.

Its subcellular location is the membrane. This is an uncharacterized protein from Escherichia coli O6:H1 (strain CFT073 / ATCC 700928 / UPEC).